A 179-amino-acid chain; its full sequence is Large ribosomal subunit protein uL5 (179 aa).

This sequence belongs to the universal ribosomal protein uL5 family. Part of the 50S ribosomal subunit; part of the 5S rRNA/L5/L18/L25 subcomplex. Contacts the 5S rRNA and the P site tRNA. Forms a bridge to the 30S subunit in the 70S ribosome.

Functionally, this is one of the proteins that bind and probably mediate the attachment of the 5S RNA into the large ribosomal subunit, where it forms part of the central protuberance. In the 70S ribosome it contacts protein S13 of the 30S subunit (bridge B1b), connecting the 2 subunits; this bridge is implicated in subunit movement. Contacts the P site tRNA; the 5S rRNA and some of its associated proteins might help stabilize positioning of ribosome-bound tRNAs. In Chromohalobacter salexigens (strain ATCC BAA-138 / DSM 3043 / CIP 106854 / NCIMB 13768 / 1H11), this protein is Large ribosomal subunit protein uL5.